A 421-amino-acid polypeptide reads, in one-letter code: Bestrophin homolog 2 (421 aa).

The next 4 helical transmembrane spans lie at 28-48, 73-93, 239-259, and 275-295; these read IWKA…IISV, LSFI…VDRW, LMYP…SIIA, and VYFP…LKVI.

Belongs to the anion channel-forming bestrophin (TC 1.A.46) family. Calcium-sensitive chloride channel subfamily. In terms of assembly, forms oligomers.

The protein resides in the cell membrane. Its function is as follows. Forms chloride channels. This is Bestrophin homolog 2 (best-2) from Caenorhabditis elegans.